Here is a 363-residue protein sequence, read N- to C-terminus: Putative glutamate--cysteine ligase 2 (363 aa).

It belongs to the glutamate--cysteine ligase type 2 family. YbdK subfamily.

The enzyme catalyses L-cysteine + L-glutamate + ATP = gamma-L-glutamyl-L-cysteine + ADP + phosphate + H(+). In terms of biological role, ATP-dependent carboxylate-amine ligase which exhibits weak glutamate--cysteine ligase activity. The polypeptide is Putative glutamate--cysteine ligase 2 (Streptomyces coelicolor (strain ATCC BAA-471 / A3(2) / M145)).